The sequence spans 222 residues: Eukaryotic translation initiation factor 3 subunit K (222 aa).

Residues 46–208 (YDLEANLAVL…KIKTKNITEK (163 aa)) enclose the PCI domain.

The protein belongs to the eIF-3 subunit K family. As to quaternary structure, component of the eukaryotic translation initiation factor 3 (eIF-3) complex. The eIF-3 complex interacts with pix.

The protein resides in the cytoplasm. Its function is as follows. Component of the eukaryotic translation initiation factor 3 (eIF-3) complex, which is involved in protein synthesis of a specialized repertoire of mRNAs and, together with other initiation factors, stimulates binding of mRNA and methionyl-tRNAi to the 40S ribosome. The eIF-3 complex specifically targets and initiates translation of a subset of mRNAs involved in cell proliferation. This Drosophila ananassae (Fruit fly) protein is Eukaryotic translation initiation factor 3 subunit K.